The primary structure comprises 126 residues: Lymphocyte antigen 6 complex locus protein G6c (126 aa).

An N-terminal signal peptide occupies residues 1–19 (MKHLLLLTLSALLYCWVSA). The UPAR/Ly6 domain maps to 21–112 (TRCHSCYKVP…PRPTPALALI (92 aa)). Cystine bridges form between Cys-23-Cys-48, Cys-26-Cys-34, and Cys-40-Cys-66. An N-linked (GlcNAc...) (high mannose) asparagine glycan is attached at Asn-89. Cys-93 and Cys-98 form a disulfide bridge. Ser-100 carries the GPI-anchor amidated serine lipid modification. Positions 101-126 (PAPRPTPALALISLTSLAGLGLWLLH) are cleaved as a propeptide — removed in mature form.

Monomer. In terms of processing, N-glycosylated. In terms of tissue distribution, highly expressed at the leading edges of cells, on filopodia.

It localises to the cell membrane. The chain is Lymphocyte antigen 6 complex locus protein G6c (Ly6g6c) from Mus musculus (Mouse).